We begin with the raw amino-acid sequence, 583 residues long: Threonine--tRNA ligase (583 aa).

A catalytic region spans residues 185–478 (DHRKLGRELD…LVEHYGGAFP (294 aa)). Zn(2+) contacts are provided by C278, H329, and H455.

Belongs to the class-II aminoacyl-tRNA synthetase family. As to quaternary structure, homodimer. Requires Zn(2+) as cofactor.

It is found in the cytoplasm. The catalysed reaction is tRNA(Thr) + L-threonine + ATP = L-threonyl-tRNA(Thr) + AMP + diphosphate + H(+). Functionally, catalyzes the attachment of threonine to tRNA(Thr) in a two-step reaction: L-threonine is first activated by ATP to form Thr-AMP and then transferred to the acceptor end of tRNA(Thr). Also edits incorrectly charged L-seryl-tRNA(Thr). This chain is Threonine--tRNA ligase, found in Borrelia turicatae (strain 91E135).